Reading from the N-terminus, the 1415-residue chain is DNA-directed RNA polymerase subunit beta' (1415 aa).

Zn(2+)-binding residues include Cys71, Cys73, Cys86, and Cys89. 3 residues coordinate Mg(2+): Asp461, Asp463, and Asp465. 4 residues coordinate Zn(2+): Cys815, Cys889, Cys896, and Cys899.

It belongs to the RNA polymerase beta' chain family. In terms of assembly, the RNAP catalytic core consists of 2 alpha, 1 beta, 1 beta' and 1 omega subunit. When a sigma factor is associated with the core the holoenzyme is formed, which can initiate transcription. The cofactor is Mg(2+). Zn(2+) is required as a cofactor.

The catalysed reaction is RNA(n) + a ribonucleoside 5'-triphosphate = RNA(n+1) + diphosphate. DNA-dependent RNA polymerase catalyzes the transcription of DNA into RNA using the four ribonucleoside triphosphates as substrates. The protein is DNA-directed RNA polymerase subunit beta' of Haemophilus influenzae (strain ATCC 51907 / DSM 11121 / KW20 / Rd).